The chain runs to 337 residues: Probable deoxyhypusine synthase (337 aa).

The Nucleophile role is filled by K308.

It belongs to the deoxyhypusine synthase family. NAD(+) is required as a cofactor.

The enzyme catalyses [eIF5A protein]-L-lysine + spermidine = [eIF5A protein]-deoxyhypusine + propane-1,3-diamine. It functions in the pathway protein modification; eIF5A hypusination. In terms of biological role, catalyzes the NAD-dependent oxidative cleavage of spermidine and the subsequent transfer of the butylamine moiety of spermidine to the epsilon-amino group of a specific lysine residue of the eIF-5A precursor protein to form the intermediate deoxyhypusine residue. This chain is Probable deoxyhypusine synthase, found in Thermococcus kodakarensis (strain ATCC BAA-918 / JCM 12380 / KOD1) (Pyrococcus kodakaraensis (strain KOD1)).